Reading from the N-terminus, the 358-residue chain is Peptide chain release factor 1 (358 aa).

Glutamine 237 carries the N5-methylglutamine modification.

This sequence belongs to the prokaryotic/mitochondrial release factor family. Methylated by PrmC. Methylation increases the termination efficiency of RF1.

Its subcellular location is the cytoplasm. In terms of biological role, peptide chain release factor 1 directs the termination of translation in response to the peptide chain termination codons UAG and UAA. The polypeptide is Peptide chain release factor 1 (Streptomyces griseus subsp. griseus (strain JCM 4626 / CBS 651.72 / NBRC 13350 / KCC S-0626 / ISP 5235)).